The primary structure comprises 185 residues: Large ribosomal subunit protein uL5 (185 aa).

The protein belongs to the universal ribosomal protein uL5 family. In terms of assembly, part of the 50S ribosomal subunit; part of the 5S rRNA/L5/L18/L25 subcomplex. Contacts the 5S rRNA and the P site tRNA. Forms a bridge to the 30S subunit in the 70S ribosome.

Functionally, this is one of the proteins that bind and probably mediate the attachment of the 5S RNA into the large ribosomal subunit, where it forms part of the central protuberance. In the 70S ribosome it contacts protein S13 of the 30S subunit (bridge B1b), connecting the 2 subunits; this bridge is implicated in subunit movement. Contacts the P site tRNA; the 5S rRNA and some of its associated proteins might help stabilize positioning of ribosome-bound tRNAs. The chain is Large ribosomal subunit protein uL5 from Bartonella quintana (strain Toulouse) (Rochalimaea quintana).